A 233-amino-acid polypeptide reads, in one-letter code: Uridylate kinase (233 aa).

Residues 9–12, Gly51, and Arg55 contribute to the ATP site; that span reads KLSG. Residues Asp69 and 130–137 contribute to the UMP site; that span reads TGNPFFST. Positions 158, 164, and 167 each coordinate ATP.

Belongs to the UMP kinase family. In terms of assembly, homohexamer.

It is found in the cytoplasm. It catalyses the reaction UMP + ATP = UDP + ADP. It participates in pyrimidine metabolism; CTP biosynthesis via de novo pathway; UDP from UMP (UMPK route): step 1/1. Its activity is regulated as follows. Inhibited by UTP. Catalyzes the reversible phosphorylation of UMP to UDP. The polypeptide is Uridylate kinase (Thermus thermophilus (strain ATCC BAA-163 / DSM 7039 / HB27)).